The primary structure comprises 473 residues: ATP synthase subunit beta (473 aa).

G158–T165 contributes to the ATP binding site.

It belongs to the ATPase alpha/beta chains family. In terms of assembly, F-type ATPases have 2 components, CF(1) - the catalytic core - and CF(0) - the membrane proton channel. CF(1) has five subunits: alpha(3), beta(3), gamma(1), delta(1), epsilon(1). CF(0) has three main subunits: a(1), b(2) and c(9-12). The alpha and beta chains form an alternating ring which encloses part of the gamma chain. CF(1) is attached to CF(0) by a central stalk formed by the gamma and epsilon chains, while a peripheral stalk is formed by the delta and b chains.

The protein resides in the cell membrane. It catalyses the reaction ATP + H2O + 4 H(+)(in) = ADP + phosphate + 5 H(+)(out). Its function is as follows. Produces ATP from ADP in the presence of a proton gradient across the membrane. The catalytic sites are hosted primarily by the beta subunits. The sequence is that of ATP synthase subunit beta from Geobacillus kaustophilus (strain HTA426).